The following is a 192-amino-acid chain: Ion-translocating oxidoreductase complex subunit A (192 aa).

The next 6 helical transmembrane spans lie at 5-25, 39-59, 65-85, 102-122, 134-154, and 171-191; these read LLLL…FLGL, IGMS…SYLV, LPFD…AVVV, ALGI…VALL, AIYG…FSAM, and AIAM…TGLV.

The protein belongs to the NqrDE/RnfAE family. The complex is composed of six subunits: RnfA, RnfB, RnfC, RnfD, RnfE and RnfG.

The protein localises to the cell inner membrane. Its function is as follows. Part of a membrane-bound complex that couples electron transfer with translocation of ions across the membrane. The polypeptide is Ion-translocating oxidoreductase complex subunit A (Shewanella putrefaciens (strain CN-32 / ATCC BAA-453)).